Reading from the N-terminus, the 492-residue chain is Glutamate--cysteine ligase A, chloroplastic (492 aa).

Cysteines 156 and 376 form a disulfide.

It belongs to the carboxylate-amine ligase family. Glutamate--cysteine ligase type 2 subfamily. As to quaternary structure, homodimer or monomer when oxidized or reduced, respectively. Post-translationally, the Cys-156-Cys-376 disulfide bridge is known to modulate the enzyme activity according to the redox status. The oxidized form constitutes the active enzyme.

It localises to the plastid. It is found in the chloroplast. It carries out the reaction L-cysteine + L-glutamate + ATP = gamma-L-glutamyl-L-cysteine + ADP + phosphate + H(+). The protein operates within sulfur metabolism; glutathione biosynthesis; glutathione from L-cysteine and L-glutamate: step 1/2. The sequence is that of Glutamate--cysteine ligase A, chloroplastic (GSH1-1) from Oryza sativa subsp. japonica (Rice).